Consider the following 464-residue polypeptide: Glutamate decarboxylase (464 aa).

Lys-274 is modified (N6-(pyridoxal phosphate)lysine).

Belongs to the group II decarboxylase family. Requires pyridoxal 5'-phosphate as cofactor.

It catalyses the reaction L-glutamate + H(+) = 4-aminobutanoate + CO2. In terms of biological role, catalyzes the pyridoxal-dependent decarboxylation of glutamate to produce 4-aminobutanoate. Has weak activity with aspartate, but cannot complement an E.coli panD deletion mutant. In Aliivibrio fischeri (strain ATCC 700601 / ES114) (Vibrio fischeri), this protein is Glutamate decarboxylase.